A 170-amino-acid polypeptide reads, in one-letter code: SKP1-like protein 16 (170 aa).

Residues 109-167 are interaction with the F-box domain of F-box proteins; sequence ILAVNYLNVQDLLGLTCQTVADHMKDMSPEEVRELFNIENDYTPEEEDAIRKENAWAFE.

The protein belongs to the SKP1 family. As to quaternary structure, part of a SCF (SKP1-cullin-F-box) protein ligase complex. Interacts with CPR1/CPR30, At3g61590 and At4g11590. As to expression, mainly detected in the siliques.

It is found in the nucleus. It participates in protein modification; protein ubiquitination. Involved in ubiquitination and subsequent proteasomal degradation of target proteins. Together with CUL1, RBX1 and a F-box protein, it forms a SCF E3 ubiquitin ligase complex. The functional specificity of this complex depends on the type of F-box protein. In the SCF complex, it serves as an adapter that links the F-box protein to CUL1. The chain is SKP1-like protein 16 (ASK16) from Arabidopsis thaliana (Mouse-ear cress).